Here is a 116-residue protein sequence, read N- to C-terminus: NADH-ubiquinone oxidoreductase chain 3 (116 aa).

The next 3 membrane-spanning stretches (helical) occupy residues 4–24, 56–76, and 88–108; these read LIIT…IAFW, FFLV…LLPL, and TLIL…YEWI.

This sequence belongs to the complex I subunit 3 family. Core subunit of respiratory chain NADH dehydrogenase (Complex I) which is composed of 45 different subunits. Interacts with TMEM186. Interacts with TMEM242.

It is found in the mitochondrion inner membrane. It catalyses the reaction a ubiquinone + NADH + 5 H(+)(in) = a ubiquinol + NAD(+) + 4 H(+)(out). Core subunit of the mitochondrial membrane respiratory chain NADH dehydrogenase (Complex I) which catalyzes electron transfer from NADH through the respiratory chain, using ubiquinone as an electron acceptor. Essential for the catalytic activity of complex I. This chain is NADH-ubiquinone oxidoreductase chain 3, found in Didelphis virginiana (North American opossum).